The following is a 705-amino-acid chain: Endoglucanase (705 aa).

The signal sequence occupies residues 1 to 23 (MKILKNCILLIIFGLLSTQLINA). Asn-75 carries N-linked (GlcNAc...) asparagine glycosylation. Asp-85 (nucleophile) is an active-site residue. Active-site residues include His-390, Asp-428, and Glu-437. The tract at residues 455–556 (NPSSTSVPTT…TPTETPSSGE (102 aa)) is disordered. Over residues 462 to 552 (PTTTPTVTET…TPTVTPTETP (91 aa)) the composition is skewed to low complexity. The segment at 463 to 552 (TTTPTVTETP…TPTVTPTETP (90 aa)) is pro/Thr repeats ('hinge') (Pro/Thr box).

This sequence belongs to the glycosyl hydrolase 9 (cellulase E) family.

It catalyses the reaction Endohydrolysis of (1-&gt;4)-beta-D-glucosidic linkages in cellulose, lichenin and cereal beta-D-glucans.. Functionally, may digest the spore cell wall during germination, to release the enclosed amoeba. The chain is Endoglucanase (celA) from Dictyostelium discoideum (Social amoeba).